An 896-amino-acid chain; its full sequence is MAAAAQLSLTQLSSGNPVYEKYYRQVDTGNTGRVLASDAAAFLKKSGLPDLILGKIWDLADTDGKGILNKQEFFVALRLVACAQNGLEVSLSSLNLAVPPPRFHDTSSPLLISGTSAAELPWAVKPEDKAKYDAIFDSLSPVNGFLSGDKVKPVLLNSKLPVDILGRVWELSDIDHDGMLDRDEFAVAMFLVYCALEKEPVPMSLPPALVPPSKRKTWVVSPAEKAKYDEIFLKTDKDMDGFVSGLEVREIFLKTGLPSTLLAHIWSLCDTKDCGKLSKDQFALAFHLISQKLIKGIDPPHVLTPEMIPPSDRASLQKNIIGSSPVADFSAIKELDTLNNEIVDLQREKNNVEQDLKEKEDTIKQRTSEVQDLQDEVQRENTNLQKLQAQKQQVQELLDELDEQKAQLEEQLKEVRKKCAEEAQLISSLKAELTSQESQISTYEEELAKAREELSRLQQETAELEESVESGKAQLEPLQQHLQDSQQEISSMQMKLMEMKDLENHNSQLNWCSSPHSILVNGATDYCSLSTSSSETANLNEHVEGQSNLESEPIHQESPARSSPELLPSGVTDENEVTTAVTEKVCSELDNNRHSKEEDPFNVDSSSLTGPVADTNLDFFQSDPFVGSDPFKDDPFGKIDPFGGDPFKGSDPFASDCFFRQSTDPFATSSTDPFSAANNSSITSVETLKHNDPFAPGGTVVAASDSATDPFASVFGNESFGGGFADFSTLSKVNNEDPFRSATSSSVSNVVITKNVFEETSVKSEDEPPALPPKIGTPTRPCPLPPGKRSINKLDSPDPFKLNDPFQPFPGNDSPKEKDPEIFCDPFTSATTTTNKEADPSNFANFSAYPSEEDMIEWAKRESEREEEQRLARLNQQEQEDLELAIALSKSEISEA.

Residue Ala2 is modified to N-acetylalanine. The segment at 2 to 330 (AAAAQLSLTQ…IGSSPVADFS (329 aa)) is interaction with DAB2. The 90-residue stretch at 15–104 (GNPVYEKYYR…NLAVPPPRFH (90 aa)) folds into the EH 1 domain. An EF-hand 1 domain is found at 48-83 (LPDLILGKIWDLADTDGKGILNKQEFFVALRLVACA). Phosphoserine occurs at positions 108 and 140. 2 consecutive EH domains span residues 128 to 216 (DKAK…SKRK) and 224 to 314 (EKAK…SDRA). EF-hand domains are found at residues 160-195 (LPVD…VYCA), 223-258 (AEKA…TGLP), and 262-292 (LAHI…ISQK). Ca(2+) contacts are provided by Asp173, Asp175, Asp177, Met179, Glu184, Asp236, Asp238, Asp240, and Glu247. A phosphoserine mark is found at Ser323, Ser324, Ser467, Ser470, Ser485, Ser562, and Ser563. A disordered region spans residues 542-606 (HVEGQSNLES…EEDPFNVDSS (65 aa)). Positions 585–599 (VCSELDNNRHSKEED) are enriched in basic and acidic residues. Tandem repeats lie at residues 599–601 (DPF), 623–625 (DPF), 629–631 (DPF), 634–636 (DPF), 640–642 (DPF), 645–647 (DPF), 651–653 (DPF), 664–666 (DPF), 672–674 (DPF), 692–694 (DPF), 709–711 (DPF), and 737–739 (DPF). A 15 X 3 AA repeats of D-P-F region spans residues 599 to 827 (DPFNVDSSSL…KDPEIFCDPF (229 aa)). Ser746 is modified (phosphoserine). The interval 760 to 848 (TSVKSEDEPP…DPSNFANFSA (89 aa)) is disordered. Positions 768 to 774 (PPALPPK) match the SH3-binding motif. 2 positions are modified to phosphothreonine: Thr777 and Thr779. A phosphoserine mark is found at Ser790 and Ser796. A run of 2 repeats spans residues 798-800 (DPF) and 804-806 (DPF). Ser814 is subject to Phosphoserine. Residues 825 to 827 (DPF) form repeat 15. Tyr849 carries the phosphotyrosine; by EGFR modification. UIM domains lie at 851-870 (SEED…EEQR) and 877-896 (QEQE…ISEA).

Interacts with SGIP1. Interacts with HGS; the interaction bridges the interaction of STAM or STAM2 with EPS15. Isoform 2 interacts with HGS and AP2A2. Part of a complex at least composed of EPS15, HGS, and either STAM or STAM2. Binds AP2A2. Interacts with AP2B1; clathrin competes with EPS15. Binds STON2. Interacts (via its SH3-binding sites) with CRK. Interacts with SH3BP4/TTP. Interacts with ERBB2. Interacts with FCHO1. Interacts with FCHO2. Interacts (via EH domains) with DAB2. Interacts (via UIM repeats) with CORO7 (when ubiquitinated at 'Lys-472'). Interacts (via UIM domains) with UBQLN1 (via ubiquitin-like domain) and can interact with both the ubiquitinated and the non-ubiquitinated forms of UBQLN1. Interacts with UBQLN2. Interacts with REPS2; the interaction is direct. Interacts with EPN1; the interaction is direct. In terms of assembly, (Microbial infection) Interacts with vaccinia virus protein A36. Post-translationally, phosphorylation on Tyr-849 is involved in the internalization of EGFR. Not required for membrane translocation after EGF treatment or for targeting to coated pits, but essential for a subsequent step in EGFR endocytosis. Phosphorylated on serine upon DNA damage, probably by ATM or ATR. In terms of processing, ubiquitinated. Ubiquitously expressed.

It localises to the cytoplasm. The protein resides in the cell membrane. Its subcellular location is the membrane. It is found in the clathrin-coated pit. The protein localises to the early endosome membrane. In terms of biological role, involved in cell growth regulation. May be involved in the regulation of mitogenic signals and control of cell proliferation. Involved in the internalization of ligand-inducible receptors of the receptor tyrosine kinase (RTK) type, in particular EGFR. Plays a role in the assembly of clathrin-coated pits (CCPs). Acts as a clathrin adapter required for post-Golgi trafficking. Seems to be involved in CCPs maturation including invagination or budding. Involved in endocytosis of integrin beta-1 (ITGB1) and transferrin receptor (TFR); internalization of ITGB1 as DAB2-dependent cargo but not TFR seems to require association with DAB2. The sequence is that of Epidermal growth factor receptor substrate 15 (EPS15) from Homo sapiens (Human).